Consider the following 993-residue polypeptide: MAGARPPPGLLPLLAPLLLPLLLPAGCWALEETLMDTKWVTSELAWTSHPESGWEEVSGYDEAMNPIRTYQVCNVRESSQNNWLRTGFIWRREVQRVYVELKFTVRDCNSIPNIPGSCKETFNLFYYEADSDVASASSPFWMENPYVKVDTIAPDESFSRLDAGRVNTKVRSFGPLSKAGFYLAFQDQGACMSLISVRAFYKKCASTTAGFALFPETLTGAEPTSLVIAPGTCIANAVEVSVPLKLYCNGDGEWMVPVGACTCATGHEPAAKESQCRACPPGSYKAKQGEGPCLPCPPNSRTTSPAASICTCHNNFYRADSDSADSACTTVPSPPRGVISNVNETSLILEWSEPRDLGGRDDLLYNVICKKCRGSSGAGGPATCSRCDDNVEFVPRQLGLTERRVHISHLLAHTRYTFEVQAVNGVSGKSPLPPRYAAVNITTNQAAPSEVPTLHLHSSSGSSLTLSWAPPERPNGVILDYEMKYFEKSKGIASTVTSQKNSVQLDGLQPDARYVVQVRARTVAGYGQYSHPAEFETTSERGSGAQQLQEQLPLIVGSTVAGFVFMVVVVVIALVCLRKQRHGPDAEYTEKLQQYIAPGMKVYIDPFTYEDPNEAVREFAKEIDVSCVKIEEVIGAGEFGEVCRGRLKLPGRREVFVAIKTLKVGYTERQRRDFLSEASIMGQFDHPNIIRLEGVVTKSRPVMILTEFMENCALDSFLRLNDGQFTVIQLVGMLRGIAAGMKYLSEMNYVHRDLAARNILVNSNLVCKVSDFGLSRFLEDDPSDPTYTSSLGGKIPIRWTAPEAIAYRKFTSASDVWSYGIVMWEVMSYGERPYWDMSNQDVINAVEQDYRLPPPMDCPTALHQLMLDCWVRDRNLRPKFSQIVNTLDKLIRNAASLKVTASAPSGMSQPLLDRTVPDYTTFTTVGDWLDAIKMGRYKESFVGAGFASFDLVAQMTAEDLLRIGVTLAGHQKKILCSIQDMRLQMNQTLPVQV.

A signal peptide spans 1–29; sequence MAGARPPPGLLPLLAPLLLPLLLPAGCWA. Over 30-554 the chain is Extracellular; the sequence is LEETLMDTKW…AQQLQEQLPL (525 aa). An Eph LBD domain is found at 31–209; it reads EETLMDTKWV…FYKKCASTTA (179 aa). Cysteine 73 and cysteine 191 are disulfide-bonded. Fibronectin type-III domains are found at residues 331–446 and 447–540; these read VPSP…TNQA and APSE…TTSE. N-linked (GlcNAc...) asparagine glycans are attached at residues asparagine 343 and asparagine 440. The helical transmembrane segment at 555 to 575 threads the bilayer; that stretch reads IVGSTVAGFVFMVVVVVIALV. Topologically, residues 576-993 are cytoplasmic; sequence CLRKQRHGPD…QMNQTLPVQV (418 aa). Tyrosine 609 carries the phosphotyrosine; by autocatalysis modification. In terms of domain architecture, Protein kinase spans 628-891; sequence VKIEEVIGAG…QIVNTLDKLI (264 aa). Residues 634–642 and lysine 660 contribute to the ATP site; that span reads IGAGEFGEV. The Proton acceptor role is filled by aspartate 753. The region spanning 920–984 is the SAM domain; it reads TTFTTVGDWL…LCSIQDMRLQ (65 aa). Positions 991–993 match the PDZ-binding motif; the sequence is VQV.

This sequence belongs to the protein kinase superfamily. Tyr protein kinase family. Ephrin receptor subfamily. As to quaternary structure, heterotetramer upon binding of the ligand. The heterotetramer is composed of an ephrin dimer and a receptor dimer. Oligomerization is probably required to induce biological responses. In terms of processing, phosphorylated. Autophosphorylates upon ligand-binding. Autophosphorylation on Tyr-609 is required for interaction with SH2 domain-containing proteins. Ubiquitinated by RNF186, mainly through 'Lys-48' and 'Lys-63'-linked polyubiquitin chains. As to expression, expressed in cells of the retinal ganglion cell layer during retinal axon guidance to the optic disk. Expressed by Paneth and progenitor cells in the crypts of the intestinal epithelium (at protein level). Expressed in myogenic progenitor cells.

It is found in the cell membrane. The protein localises to the cell projection. The protein resides in the dendrite. The enzyme catalyses L-tyrosyl-[protein] + ATP = O-phospho-L-tyrosyl-[protein] + ADP + H(+). Receptor tyrosine kinase which binds promiscuously transmembrane ephrin-B family ligands residing on adjacent cells, leading to contact-dependent bidirectional signaling into neighboring cells. The signaling pathway downstream of the receptor is referred to as forward signaling while the signaling pathway downstream of the ephrin ligand is referred to as reverse signaling. Generally has an overlapping and redundant function with EPHB2. Like EPHB2, functions in axon guidance during development regulating for instance the neurons forming the corpus callosum and the anterior commissure, 2 major interhemispheric connections between the temporal lobes of the cerebral cortex. In addition to its role in axon guidance also plays an important redundant role with other ephrin-B receptors in development and maturation of dendritic spines and the formation of excitatory synapses. Controls other aspects of development through regulation of cell migration and positioning. This includes angiogenesis, palate development and thymic epithelium development for instance. Forward and reverse signaling through the EFNB2/EPHB3 complex also regulate migration and adhesion of cells that tubularize the urethra and septate the cloaca. Finally, plays an important role in intestinal epithelium differentiation segregating progenitor from differentiated cells in the crypt. The chain is Ephrin type-B receptor 3 (Ephb3) from Mus musculus (Mouse).